Consider the following 386-residue polypeptide: 8-amino-7-oxononanoate synthase (386 aa).

Arg26 serves as a coordination point for substrate. 104-105 (GY) lines the pyridoxal 5'-phosphate pocket. His129 provides a ligand contact to substrate. The pyridoxal 5'-phosphate site is built by Ser176, His204, and Thr232. Position 235 is an N6-(pyridoxal phosphate)lysine (Lys235). Thr349 lines the substrate pocket.

The protein belongs to the class-II pyridoxal-phosphate-dependent aminotransferase family. BioF subfamily. In terms of assembly, homodimer. It depends on pyridoxal 5'-phosphate as a cofactor.

The enzyme catalyses 6-carboxyhexanoyl-[ACP] + L-alanine + H(+) = (8S)-8-amino-7-oxononanoate + holo-[ACP] + CO2. Its pathway is cofactor biosynthesis; biotin biosynthesis. Catalyzes the decarboxylative condensation of pimeloyl-[acyl-carrier protein] and L-alanine to produce 8-amino-7-oxononanoate (AON), [acyl-carrier protein], and carbon dioxide. This chain is 8-amino-7-oxononanoate synthase, found in Chromohalobacter salexigens (strain ATCC BAA-138 / DSM 3043 / CIP 106854 / NCIMB 13768 / 1H11).